A 51-amino-acid chain; its full sequence is Protein Tat (51 aa).

Residues 1–25 (EAETATKSCSGRQANQVSLPKQPAS) show a composition bias toward polar residues. The disordered stretch occupies residues 1-51 (EAETATKSCSGRQANQVSLPKQPASQPRGDPTGPKESKKKVETETETDPVN). Lysine 21 is covalently cross-linked (Glycyl lysine isopeptide (Lys-Gly) (interchain with G-Cter in ubiquitin)). A Cell attachment site motif is present at residues 28 to 30 (RGD). Basic and acidic residues predominate over residues 33–43 (GPKESKKKVET).

The protein belongs to the lentiviruses Tat family. As to quaternary structure, interacts with host CCNT1. Associates with the P-TEFb complex composed at least of Tat, P-TEFb (CDK9 and CCNT1), TAR RNA, RNA Pol II. Recruits the HATs CREBBP, TAF1/TFIID, EP300, PCAF and GCN5L2. Interacts with host KAT5/Tip60; this interaction targets the latter to degradation. Interacts with the host deacetylase SIRT1. Interacts with host capping enzyme RNGTT; this interaction stimulates RNGTT. Binds to host KDR, and to the host integrins ITGAV/ITGB3 and ITGA5/ITGB1. Interacts with host KPNB1/importin beta-1 without previous binding to KPNA1/importin alpha-1. Interacts with EIF2AK2. Interacts with host nucleosome assembly protein NAP1L1; this interaction may be required for the transport of Tat within the nucleus, since the two proteins interact at the nuclear rim. Interacts with host C1QBP/SF2P32; this interaction involves lysine-acetylated Tat. Interacts with the host chemokine receptors CCR2, CCR3 and CXCR4. Interacts with host DPP4/CD26; this interaction may trigger an anti-proliferative effect. Interacts with host LDLR. Interacts with the host extracellular matrix metalloproteinase MMP1. Interacts with host PRMT6; this interaction mediates Tat's methylation. Interacts with, and is ubiquitinated by MDM2/Hdm2. Interacts with host PSMC3 and HTATIP2. Interacts with STAB1; this interaction may overcome SATB1-mediated repression of IL2 and IL2RA (interleukin) in T cells by binding to the same domain than HDAC1. Interacts (when acetylated) with human CDK13, thereby increasing HIV-1 mRNA splicing and promoting the production of the doubly spliced HIV-1 protein Nef. In terms of processing, acetylation by EP300, CREBBP, GCN5L2/GCN5 and PCAF regulates the transactivation activity of Tat. Phosphorylated by EIF2AK2 on serine and threonine residues adjacent to the basic region important for TAR RNA binding and function. Phosphorylation of Tat by EIF2AK2 is dependent on the prior activation of EIF2AK2 by dsRNA. Post-translationally, asymmetrical arginine methylation by host PRMT6 seems to diminish the transactivation capacity of Tat and affects the interaction with host CCNT1. In terms of processing, polyubiquitination by MDM2 does not target Tat to degradation, but activates its transactivation function and fosters interaction with CCNT1 and TAR RNA.

Its subcellular location is the host nucleus. It localises to the host nucleolus. The protein localises to the host cytoplasm. The protein resides in the secreted. Its function is as follows. Transcriptional activator that increases RNA Pol II processivity, thereby increasing the level of full-length viral transcripts. Recognizes a hairpin structure at the 5'-LTR of the nascent viral mRNAs referred to as the transactivation responsive RNA element (TAR) and recruits the cyclin T1-CDK9 complex (P-TEFb complex) that will in turn hyperphosphorylate the RNA polymerase II to allow efficient elongation. The CDK9 component of P-TEFb and other Tat-activated kinases hyperphosphorylate the C-terminus of RNA Pol II that becomes stabilized and much more processive. Other factors such as HTATSF1/Tat-SF1, SUPT5H/SPT5, and HTATIP2 are also important for Tat's function. Besides its effect on RNA Pol II processivity, Tat induces chromatin remodeling of proviral genes by recruiting the histone acetyltransferases (HATs) CREBBP, EP300 and PCAF to the chromatin. This also contributes to the increase in proviral transcription rate, especially when the provirus integrates in transcriptionally silent region of the host genome. To ensure maximal activation of the LTR, Tat mediates nuclear translocation of NF-kappa-B by interacting with host RELA. Through its interaction with host TBP, Tat may also modulate transcription initiation. Tat can reactivate a latently infected cell by penetrating in it and transactivating its LTR promoter. In the cytoplasm, Tat is thought to act as a translational activator of HIV-1 mRNAs. Extracellular circulating Tat can be endocytosed by surrounding uninfected cells via the binding to several surface receptors such as CD26, CXCR4, heparan sulfate proteoglycans (HSPG) or LDLR. Neurons are rarely infected, but they internalize Tat via their LDLR. Endosomal low pH allows Tat to cross the endosome membrane to enter the cytosol and eventually further translocate into the nucleus, thereby inducing severe cell dysfunctions ranging from cell activation to cell death. Through its interaction with nuclear HATs, Tat is potentially able to control the acetylation-dependent cellular gene expression. Tat seems to inhibit the HAT activity of KAT5/Tip60 and TAF1, and consequently modify the expression of specific cellular genes. Modulates the expression of many cellular genes involved in cell survival, proliferation or in coding for cytokines (such as IL10) or cytokine receptors. May be involved in the derepression of host interleukin IL2 expression. Mediates the activation of cyclin-dependent kinases and dysregulation of microtubule network. Tat plays a role in T-cell and neurons apoptosis. Tat induced neurotoxicity and apoptosis probably contribute to neuroAIDS. Host extracellular matrix metalloproteinase MMP1 cleaves Tat and decreases Tat's mediated neurotoxicity. Circulating Tat also acts as a chemokine-like and/or growth factor-like molecule that binds to specific receptors on the surface of the cells, affecting many cellular pathways. In the vascular system, Tat binds to ITGAV/ITGB3 and ITGA5/ITGB1 integrins dimers at the surface of endothelial cells and competes with bFGF for heparin-binding sites, leading to an excess of soluble bFGF. Binds to KDR/VEGFR-2. All these Tat-mediated effects enhance angiogenesis in Kaposi's sarcoma lesions. The polypeptide is Protein Tat (Homo sapiens (Human)).